Here is a 346-residue protein sequence, read N- to C-terminus: GTPase Obg (346 aa).

In terms of domain architecture, Obg spans 1-159 (MRFVDEVTFV…RELRLELQLL (159 aa)). A disordered region spans residues 128–148 (LHFKSSTNRAPRQSTEGTAGE). Polar residues predominate over residues 130–144 (FKSSTNRAPRQSTEG). The 176-residue stretch at 160–335 (ADVGLLGMPN…LCGDIMNDLE (176 aa)) folds into the OBG-type G domain. GTP-binding positions include 166–173 (GMPNVGKS), 191–195 (FTTLY), 213–216 (DIPG), 285–288 (NRLD), and 316–318 (SGL). Mg(2+) is bound by residues serine 173 and threonine 193.

The protein belongs to the TRAFAC class OBG-HflX-like GTPase superfamily. OBG GTPase family. As to quaternary structure, monomer. Mg(2+) serves as cofactor.

The protein localises to the cytoplasm. Functionally, an essential GTPase which binds GTP, GDP and possibly (p)ppGpp with moderate affinity, with high nucleotide exchange rates and a fairly low GTP hydrolysis rate. Plays a role in control of the cell cycle, stress response, ribosome biogenesis and in those bacteria that undergo differentiation, in morphogenesis control. This Halorhodospira halophila (strain DSM 244 / SL1) (Ectothiorhodospira halophila (strain DSM 244 / SL1)) protein is GTPase Obg.